A 601-amino-acid chain; its full sequence is Elongation factor 4 (601 aa).

The 183-residue stretch at 6-188 (NYIRNFSIVA…AIVRQLPPPH (183 aa)) folds into the tr-type G domain. Residues 18-23 (DHGKST) and 135-138 (NKVD) each bind GTP.

Belongs to the TRAFAC class translation factor GTPase superfamily. Classic translation factor GTPase family. LepA subfamily.

The protein localises to the cell inner membrane. It catalyses the reaction GTP + H2O = GDP + phosphate + H(+). Required for accurate and efficient protein synthesis under certain stress conditions. May act as a fidelity factor of the translation reaction, by catalyzing a one-codon backward translocation of tRNAs on improperly translocated ribosomes. Back-translocation proceeds from a post-translocation (POST) complex to a pre-translocation (PRE) complex, thus giving elongation factor G a second chance to translocate the tRNAs correctly. Binds to ribosomes in a GTP-dependent manner. This Bartonella quintana (strain Toulouse) (Rochalimaea quintana) protein is Elongation factor 4.